Here is a 194-residue protein sequence, read N- to C-terminus: dCTP deaminase (194 aa).

DCTP is bound by residues 110-115, aspartate 128, 136-138, tyrosine 171, lysine 178, and glutamine 182; these read RSSLAR and VLE. Glutamate 138 serves as the catalytic Proton donor/acceptor. Positions 169-194 are disordered; the sequence is RPYNKRDNAKYKDQTSAVGSRISGEN. A compositionally biased stretch (basic and acidic residues) spans 170–181; it reads PYNKRDNAKYKD. Over residues 182–194 the composition is skewed to polar residues; it reads QTSAVGSRISGEN.

Belongs to the dCTP deaminase family. In terms of assembly, homotrimer.

It catalyses the reaction dCTP + H2O + H(+) = dUTP + NH4(+). It functions in the pathway pyrimidine metabolism; dUMP biosynthesis; dUMP from dCTP (dUTP route): step 1/2. In terms of biological role, catalyzes the deamination of dCTP to dUTP. This is dCTP deaminase from Marinomonas sp. (strain MWYL1).